The primary structure comprises 251 residues: Ubiquinone/menaquinone biosynthesis C-methyltransferase UbiE (251 aa).

S-adenosyl-L-methionine-binding positions include Thr-74, Asp-95, 123–124 (NA), and Ser-140.

This sequence belongs to the class I-like SAM-binding methyltransferase superfamily. MenG/UbiE family.

It catalyses the reaction a 2-demethylmenaquinol + S-adenosyl-L-methionine = a menaquinol + S-adenosyl-L-homocysteine + H(+). It carries out the reaction a 2-methoxy-6-(all-trans-polyprenyl)benzene-1,4-diol + S-adenosyl-L-methionine = a 5-methoxy-2-methyl-3-(all-trans-polyprenyl)benzene-1,4-diol + S-adenosyl-L-homocysteine + H(+). It participates in quinol/quinone metabolism; menaquinone biosynthesis; menaquinol from 1,4-dihydroxy-2-naphthoate: step 2/2. Its pathway is cofactor biosynthesis; ubiquinone biosynthesis. In terms of biological role, methyltransferase required for the conversion of demethylmenaquinol (DMKH2) to menaquinol (MKH2) and the conversion of 2-polyprenyl-6-methoxy-1,4-benzoquinol (DDMQH2) to 2-polyprenyl-3-methyl-6-methoxy-1,4-benzoquinol (DMQH2). This is Ubiquinone/menaquinone biosynthesis C-methyltransferase UbiE from Cronobacter sakazakii (strain ATCC BAA-894) (Enterobacter sakazakii).